We begin with the raw amino-acid sequence, 299 residues long: Hemolysin C homolog (299 aa).

CBS domains are found at residues 80 to 142 (MVPR…NGRL) and 145 to 202 (LIRK…IDDE).

It belongs to the UPF0053 family. Hemolysin C subfamily.

The sequence is that of Hemolysin C homolog (tlyC) from Rickettsia conorii (strain ATCC VR-613 / Malish 7).